Consider the following 178-residue polypeptide: Nucleoside triphosphate/diphosphate phosphatase (178 aa).

Catalysis depends on arginine 23, which acts as the Proton donor. Mg(2+) contacts are provided by asparagine 87, aspartate 103, aspartate 105, aspartate 107, aspartate 120, and glutamate 123.

It belongs to the Ntdp family. Mg(2+) is required as a cofactor.

The catalysed reaction is a ribonucleoside 5'-triphosphate + H2O = a ribonucleoside 5'-diphosphate + phosphate + H(+). The enzyme catalyses a ribonucleoside 5'-diphosphate + H2O = a ribonucleoside 5'-phosphate + phosphate + H(+). Has nucleoside phosphatase activity towards nucleoside triphosphates and nucleoside diphosphates. The protein is Nucleoside triphosphate/diphosphate phosphatase of Latilactobacillus sakei subsp. sakei (strain 23K) (Lactobacillus sakei subsp. sakei).